Here is a 74-residue protein sequence, read N- to C-terminus: Protein SlyX homolog (74 aa).

It belongs to the SlyX family.

The sequence is that of Protein SlyX homolog from Aliivibrio salmonicida (strain LFI1238) (Vibrio salmonicida (strain LFI1238)).